The following is a 621-amino-acid chain: Probable bifunctional dTTP/UTP pyrophosphatase/methyltransferase protein (621 aa).

The tract at residues 11-223 (LHKRVVLASA…PPRPEDLRRS (213 aa)) is MAF-like. S21 is subject to Phosphoserine. The Proton acceptor; for pyrophosphatase activity role is filled by D88. S228 bears the Phosphoserine mark. Phosphothreonine is present on T234. The interval 235 to 279 (FEDLSDVEGGGSEPTQRDAGSRDEKAEAGEAGQATAEAECHRTRE) is disordered. S239 is subject to Phosphoserine. Over residues 249 to 262 (TQRDAGSRDEKAEA) the composition is skewed to basic and acidic residues. Residues 277-621 (TRETLPPFPT…DAILATKVAP (345 aa)) are ASMT-like. A Phosphoserine modification is found at S421. S-adenosyl-L-methionine-binding positions include D482, 508-510 (GDF), and R525.

The protein in the N-terminal section; belongs to the Maf family. YhdE subfamily. In the C-terminal section; belongs to the class I-like SAM-binding methyltransferase superfamily. Cation-independent O-methyltransferase family. As to quaternary structure, homodimer. The cofactor is a divalent metal cation. Widely expressed. In adult, highly expressed in pancreas, placenta, fibroblast, thymus, prostate, testis, ovary and colon. Expressed at lower levels in spleen, small intestine and leukocytes. In fetus, expressed at high levels in the lung and kidney and at lower level in brain and liver.

It catalyses the reaction dTTP + H2O = dTMP + diphosphate + H(+). The enzyme catalyses UTP + H2O = UMP + diphosphate + H(+). The catalysed reaction is CTP + H2O = CMP + diphosphate + H(+). It carries out the reaction psi-UTP + H2O = psi-UMP + diphosphate + H(+). It catalyses the reaction 5-methyl-UTP + H2O = 5-methyl-UMP + diphosphate + H(+). The enzyme catalyses 5-methyl-CTP + H2O = 5-methyl-CMP + diphosphate + H(+). Its function is as follows. Nucleoside triphosphate pyrophosphatase that hydrolyzes dTTP and UTP. Can also hydrolyze CTP and the modified nucleotides pseudo-UTP, 5-methyl-UTP (m(5)UTP) and 5-methyl-CTP (m(5)CTP). Has weak activity with dCTP, 8-oxo-GTP and N(4)-methyl-dCTP. May have a dual role in cell division arrest and in preventing the incorporation of modified nucleotides into cellular nucleic acids. In addition, the presence of the putative catalytic domain of S-adenosyl-L-methionine binding in the C-terminal region argues for a methyltransferase activity. The sequence is that of Probable bifunctional dTTP/UTP pyrophosphatase/methyltransferase protein (ASMTL) from Homo sapiens (Human).